We begin with the raw amino-acid sequence, 349 residues long: NADH-quinone oxidoreductase subunit H (349 aa).

Transmembrane regions (helical) follow at residues 16–36 (WPVVWTLLKIVAIVAPLMGCV), 88–108 (GLFIVGPILALAPSLVAWAVV), 123–143 (LLFLLAVTSMEVYGVIVAGWA), 157–177 (AAQMVSYEVSMGFALICVLLI), 202–222 (FLSWNWLPLLPMFVVYLISGI), 264–284 (ILVSILTSVLFLGGWLSPVGF), 285–305 (LPDGFHWLALKTASILFIFLW), and 325–345 (VFIPVTLVWVVVVAVWLMSPL).

Belongs to the complex I subunit 1 family. As to quaternary structure, NDH-1 is composed of 14 different subunits. Subunits NuoA, H, J, K, L, M, N constitute the membrane sector of the complex.

Its subcellular location is the cell inner membrane. It catalyses the reaction a quinone + NADH + 5 H(+)(in) = a quinol + NAD(+) + 4 H(+)(out). Its function is as follows. NDH-1 shuttles electrons from NADH, via FMN and iron-sulfur (Fe-S) centers, to quinones in the respiratory chain. The immediate electron acceptor for the enzyme in this species is believed to be ubiquinone. Couples the redox reaction to proton translocation (for every two electrons transferred, four hydrogen ions are translocated across the cytoplasmic membrane), and thus conserves the redox energy in a proton gradient. This subunit may bind ubiquinone. The sequence is that of NADH-quinone oxidoreductase subunit H from Azoarcus sp. (strain BH72).